A 549-amino-acid polypeptide reads, in one-letter code: Glucose-6-phosphate isomerase (549 aa).

The Proton donor role is filled by glutamate 355. Active-site residues include histidine 386 and lysine 514.

The protein belongs to the GPI family.

The protein resides in the cytoplasm. The catalysed reaction is alpha-D-glucose 6-phosphate = beta-D-fructose 6-phosphate. Its pathway is carbohydrate biosynthesis; gluconeogenesis. The protein operates within carbohydrate degradation; glycolysis; D-glyceraldehyde 3-phosphate and glycerone phosphate from D-glucose: step 2/4. In terms of biological role, catalyzes the reversible isomerization of glucose-6-phosphate to fructose-6-phosphate. The polypeptide is Glucose-6-phosphate isomerase (Salmonella typhi).